The following is a 111-amino-acid chain: C-type lectin lectoxin-Enh2 (111 aa).

A signal peptide spans 1-23; sequence MGQFTVVSLGLLAMFLSLSGAKG. Cysteines 26 and 37 form a disulfide. One can recognise a C-type lectin domain in the interval 33–108; that stretch reads RNGVCNKLFP…CASLHPFICQ (76 aa). The short motif at 72–74 is the Mannose-binding element; that stretch reads EPN. Ca(2+)-binding residues include Glu-80, Asn-95, and Asp-96. Cys-82 and Cys-99 are disulfide-bonded.

This sequence belongs to the true venom lectin family. Expressed by the venom gland.

The protein resides in the secreted. Functionally, mannose-binding lectin which recognizes specific carbohydrate structures and agglutinates a variety of animal cells by binding to cell-surface glycoproteins and glycolipids. May be a calcium-dependent lectin. In Pseudoferania polylepis (Macleay's water snake), this protein is C-type lectin lectoxin-Enh2.